A 281-amino-acid polypeptide reads, in one-letter code: Acidic leucine-rich nuclear phosphoprotein 32-related protein (281 aa).

LRR repeat units follow at residues 29–52 (YESL…EKEL), 56–78 (FKNL…IPSI), 79–103 (ATLN…IVQN), and 105–128 (PNIK…TLKE). An LRRCT domain is found at 140–178 (NPFADNPNYRKELFEFLPNVKIIDCYNKEGMEVLSSDEE). The segment covering 197–244 (FKDEDDEDEEFVPNDNEDDDEDDELDDDLEDEDMEDLDKEDLDKEDYD) has biased composition (acidic residues). The interval 197-281 (FKDEDDEDEE…DMDLKKTKLE (85 aa)) is disordered. Positions 245–266 (IDTKETEGVNKDEKSNKRKQDA) are enriched in basic and acidic residues.

Belongs to the ANP32 family.

This is Acidic leucine-rich nuclear phosphoprotein 32-related protein from Plasmodium falciparum (isolate 3D7).